The primary structure comprises 263 residues: Large ribosomal subunit protein uL29m (263 aa).

2 disordered regions span residues 51-92 (ARVT…EELP) and 208-263 (PEID…APRV). Residues 53–66 (VTRDNSKQRGESAL) show a composition bias toward basic and acidic residues. Polar residues predominate over residues 214–223 (NPENPYTPST). The span at 233-245 (GAEASETQSTTTE) shows a compositional bias: low complexity. Polar residues predominate over residues 246 to 257 (IDPTTIPSSKSQ).

This sequence belongs to the universal ribosomal protein uL29 family. Component of the mitochondrial large ribosomal subunit (mt-LSU). Mature N.crassa 74S mitochondrial ribosomes consist of a small (37S) and a large (54S) subunit. The 37S small subunit contains a 16S ribosomal RNA (16S mt-rRNA) and 32 different proteins. The 54S large subunit contains a 23S rRNA (23S mt-rRNA) and 42 different proteins.

The protein localises to the mitochondrion. Component of the mitochondrial ribosome (mitoribosome), a dedicated translation machinery responsible for the synthesis of mitochondrial genome-encoded proteins, including at least some of the essential transmembrane subunits of the mitochondrial respiratory chain. The mitoribosomes are attached to the mitochondrial inner membrane and translation products are cotranslationally integrated into the membrane. The protein is Large ribosomal subunit protein uL29m (mrpl4) of Neurospora crassa (strain ATCC 24698 / 74-OR23-1A / CBS 708.71 / DSM 1257 / FGSC 987).